The following is a 125-amino-acid chain: Small ribosomal subunit protein uS12 (125 aa).

Asp-89 is modified (3-methylthioaspartic acid). Positions 106-125 (GVKDRKQSRSKYGAKRPKKA) are disordered. The segment covering 113-125 (SRSKYGAKRPKKA) has biased composition (basic residues).

This sequence belongs to the universal ribosomal protein uS12 family. In terms of assembly, part of the 30S ribosomal subunit. Contacts proteins S8 and S17. May interact with IF1 in the 30S initiation complex.

Its function is as follows. With S4 and S5 plays an important role in translational accuracy. Functionally, interacts with and stabilizes bases of the 16S rRNA that are involved in tRNA selection in the A site and with the mRNA backbone. Located at the interface of the 30S and 50S subunits, it traverses the body of the 30S subunit contacting proteins on the other side and probably holding the rRNA structure together. The combined cluster of proteins S8, S12 and S17 appears to hold together the shoulder and platform of the 30S subunit. This chain is Small ribosomal subunit protein uS12, found in Variovorax paradoxus (strain S110).